Here is a 145-residue protein sequence, read N- to C-terminus: uncharacterized protein (145 aa).

Residues 63 to 83 (FLCLPLFLSFLVANLILWLSF) form a helical membrane-spanning segment.

The protein localises to the mitochondrion membrane. This is an uncharacterized protein from Arabidopsis thaliana (Mouse-ear cress).